We begin with the raw amino-acid sequence, 547 residues long: (E)-beta-caryophyllene synthase (547 aa).

Mg(2+) contacts are provided by Asp302 and Asp306. The substrate site is built by Asp302, Asp306, Arg443, and Asn446. The short motif at 302-306 (DDLYD) is the DDXXD motif element. Residues Asn446 and Glu454 each coordinate Mg(2+).

The protein belongs to the terpene synthase family. As to quaternary structure, monomer. Mg(2+) is required as a cofactor. The cofactor is Mn(2+).

It is found in the cytoplasm. The catalysed reaction is (2E,6E)-farnesyl diphosphate = (-)-(E)-beta-caryophyllene + diphosphate. It functions in the pathway secondary metabolite biosynthesis; terpenoid biosynthesis. Functionally, component of the volatile terpenes biosynthesis pathways. Sesquiterpene synthase that converts farnesyl diphosphate to (E)-beta-caryophyllene. Involved in indirect defense by producing volatile signals attracting natural enemies of herbivores. The polypeptide is (E)-beta-caryophyllene synthase (Zea mays (Maize)).